A 29-amino-acid polypeptide reads, in one-letter code: Cytochrome b6-f complex subunit 8 (29 aa).

Residues 3 to 23 (IVSLAWASLMVVFTFSLSLVV) traverse the membrane as a helical segment.

Belongs to the PetN family. In terms of assembly, the 4 large subunits of the cytochrome b6-f complex are cytochrome b6, subunit IV (17 kDa polypeptide, PetD), cytochrome f and the Rieske protein, while the 4 small subunits are PetG, PetL, PetM and PetN. The complex functions as a dimer.

The protein resides in the plastid. The protein localises to the chloroplast thylakoid membrane. Component of the cytochrome b6-f complex, which mediates electron transfer between photosystem II (PSII) and photosystem I (PSI), cyclic electron flow around PSI, and state transitions. This Coffea arabica (Arabian coffee) protein is Cytochrome b6-f complex subunit 8.